The chain runs to 409 residues: FADH(2)-dependent resorcinol hydroxylase, oxygenase component (409 aa).

This sequence belongs to the HpaH/HsaA monooxygenase family. The FADH(2)-dependent resorcinol hydroxylase is composed of two subunits, GraA (the oxygenase component) and GraD (the reductase component). Both subunits are required for activity.

It catalyses the reaction resorcinol + FADH2 + O2 = benzene-1,2,4-triol + FAD + H2O + H(+). Its pathway is aromatic compound metabolism. Its function is as follows. Involved in the gamma-resorcylate (2,6-dihydroxybenzoate) catabolism. Oxygenase component of the resorcinol hydroxylase, which catalyzes the FADH(2)-dependent conversion of resorcinol to hydroxyquinol. This chain is FADH(2)-dependent resorcinol hydroxylase, oxygenase component, found in Rhizobium sp. (strain MTP-10005).